We begin with the raw amino-acid sequence, 85 residues long: Defensin-like protein 11 (85 aa).

The signal sequence occupies residues 1-29 (MGKTISFSAIILVFLLVSTGLMKQGDAQA). Cystine bridges form between Cys32/Cys84, Cys44/Cys68, Cys54/Cys75, and Cys58/Cys77.

It belongs to the DEFL family.

The protein localises to the secreted. The chain is Defensin-like protein 11 from Arabidopsis thaliana (Mouse-ear cress).